A 420-amino-acid chain; its full sequence is Tyrosine--tRNA ligase 2 (420 aa).

Y36 lines the L-tyrosine pocket. The 'HIGH' region motif lies at 41–50; sequence PTADSLHIGH. Residues Y171 and Q175 each contribute to the L-tyrosine site. Positions 231–235 match the 'KMSKS' region motif; that stretch reads KFGKT. Residue K234 coordinates ATP. An S4 RNA-binding domain is found at 354-420; sequence LSLVDLLVTS…GKKKYFLLKY (67 aa).

It belongs to the class-I aminoacyl-tRNA synthetase family. TyrS type 1 subfamily. In terms of assembly, homodimer.

The protein resides in the cytoplasm. It catalyses the reaction tRNA(Tyr) + L-tyrosine + ATP = L-tyrosyl-tRNA(Tyr) + AMP + diphosphate + H(+). Its function is as follows. Catalyzes the attachment of tyrosine to tRNA(Tyr) in a two-step reaction: tyrosine is first activated by ATP to form Tyr-AMP and then transferred to the acceptor end of tRNA(Tyr). In Enterococcus faecalis (strain ATCC 700802 / V583), this protein is Tyrosine--tRNA ligase 2.